A 220-amino-acid chain; its full sequence is Phosphoserine phosphatase (220 aa).

Aspartate 11 functions as the Nucleophile in the catalytic mechanism. The Mg(2+) site is built by aspartate 11 and aspartate 13. Residue aspartate 13 is the Proton donor of the active site. Residues glutamate 20, arginine 56, 99 to 100 (SG), and lysine 144 each bind substrate. Aspartate 167 contacts Mg(2+). Asparagine 170 contacts substrate.

It belongs to the HAD-like hydrolase superfamily. SerB family. Mg(2+) serves as cofactor.

It carries out the reaction O-phospho-L-serine + H2O = L-serine + phosphate. The catalysed reaction is O-phospho-D-serine + H2O = D-serine + phosphate. The protein operates within amino-acid biosynthesis; L-serine biosynthesis; L-serine from 3-phospho-D-glycerate: step 3/3. In Idiomarina loihiensis (strain ATCC BAA-735 / DSM 15497 / L2-TR), this protein is Phosphoserine phosphatase.